Reading from the N-terminus, the 355-residue chain is UDP-N-acetylglucosamine--N-acetylmuramyl-(pentapeptide) pyrophosphoryl-undecaprenol N-acetylglucosamine transferase (355 aa).

Residues 15–17 (TGG), asparagine 127, arginine 163, serine 191, isoleucine 244, 263–268 (ALTVSE), and glutamine 288 contribute to the UDP-N-acetyl-alpha-D-glucosamine site.

It belongs to the glycosyltransferase 28 family. MurG subfamily.

The protein localises to the cell inner membrane. It catalyses the reaction di-trans,octa-cis-undecaprenyl diphospho-N-acetyl-alpha-D-muramoyl-L-alanyl-D-glutamyl-meso-2,6-diaminopimeloyl-D-alanyl-D-alanine + UDP-N-acetyl-alpha-D-glucosamine = di-trans,octa-cis-undecaprenyl diphospho-[N-acetyl-alpha-D-glucosaminyl-(1-&gt;4)]-N-acetyl-alpha-D-muramoyl-L-alanyl-D-glutamyl-meso-2,6-diaminopimeloyl-D-alanyl-D-alanine + UDP + H(+). Its pathway is cell wall biogenesis; peptidoglycan biosynthesis. Its function is as follows. Cell wall formation. Catalyzes the transfer of a GlcNAc subunit on undecaprenyl-pyrophosphoryl-MurNAc-pentapeptide (lipid intermediate I) to form undecaprenyl-pyrophosphoryl-MurNAc-(pentapeptide)GlcNAc (lipid intermediate II). This chain is UDP-N-acetylglucosamine--N-acetylmuramyl-(pentapeptide) pyrophosphoryl-undecaprenol N-acetylglucosamine transferase, found in Photorhabdus laumondii subsp. laumondii (strain DSM 15139 / CIP 105565 / TT01) (Photorhabdus luminescens subsp. laumondii).